Here is a 371-residue protein sequence, read N- to C-terminus: Cytochrome b (371 aa).

4 helical membrane passes run 25–45 (FGSMLLTCSALQVMTGFSLSM), 69–90 (WVMQNLHAIGASMFFICIYMYI), 105–125 (WLSGTTLLIMLMATAFFGYVL), and 170–190 (FFALHFILPFGIISVSSIHIM). His75 is a binding site for heme b. Positions 174 and 188 each coordinate heme b. A ubiquinone is bound at residue His193. 4 consecutive transmembrane segments (helical) span residues 218–238 (YKDILMISIMIITLLLTVSFF), 280–300 (LGGALALVMSIMILFTMPFTH), 312–332 (LMQFMFWTLVATFVIITWTAT), and 339–358 (FTTISQVASIIYFTFFMSNP).

It belongs to the cytochrome b family. As to quaternary structure, the cytochrome bc1 complex contains 3 respiratory subunits (MT-CYB, CYC1 and UQCRFS1), 2 core proteins (UQCRC1 and UQCRC2) and probably 6 low-molecular weight proteins. Heme b serves as cofactor.

Its subcellular location is the mitochondrion inner membrane. Its function is as follows. Component of the ubiquinol-cytochrome c reductase complex (complex III or cytochrome b-c1 complex) that is part of the mitochondrial respiratory chain. The b-c1 complex mediates electron transfer from ubiquinol to cytochrome c. Contributes to the generation of a proton gradient across the mitochondrial membrane that is then used for ATP synthesis. This Candoia aspera (New Guinea boa) protein is Cytochrome b (MT-CYB).